A 504-amino-acid chain; its full sequence is Galactose/methyl galactoside import ATP-binding protein MglA (504 aa).

ABC transporter domains lie at 8-247 (LEMN…VGRD) and 258-504 (TPGE…TRFI). 40 to 47 (GENGAGKS) serves as a coordination point for ATP.

The protein belongs to the ABC transporter superfamily. Galactose/methyl galactoside importer (TC 3.A.1.2.3) family. As to quaternary structure, the complex is composed of one ATP-binding protein (MglA), two transmembrane proteins (MglC) and a solute-binding protein (MglB).

It localises to the cell membrane. The catalysed reaction is D-galactose(out) + ATP + H2O = D-galactose(in) + ADP + phosphate + H(+). The enzyme catalyses methyl beta-D-galactoside(out) + ATP + H2O = methyl beta-D-galactoside(in) + ADP + phosphate + H(+). In terms of biological role, part of the ABC transporter complex MglABC involved in galactose/methyl galactoside import. Responsible for energy coupling to the transport system. The sequence is that of Galactose/methyl galactoside import ATP-binding protein MglA from Clostridium tetani (strain Massachusetts / E88).